The primary structure comprises 507 residues: ATP synthase subunit alpha, chloroplastic (507 aa).

170 to 177 (GDRQTGKT) serves as a coordination point for ATP. Threonine 257 is modified (phosphothreonine).

It belongs to the ATPase alpha/beta chains family. As to quaternary structure, F-type ATPases have 2 components, CF(1) - the catalytic core - and CF(0) - the membrane proton channel. CF(1) has five subunits: alpha(3), beta(3), gamma(1), delta(1), epsilon(1). CF(0) has four main subunits: a, b, b' and c.

The protein localises to the plastid. It is found in the chloroplast thylakoid membrane. It carries out the reaction ATP + H2O + 4 H(+)(in) = ADP + phosphate + 5 H(+)(out). Its function is as follows. Produces ATP from ADP in the presence of a proton gradient across the membrane. The alpha chain is a regulatory subunit. The protein is ATP synthase subunit alpha, chloroplastic of Crucihimalaya wallichii (Rock-cress).